Consider the following 169-residue polypeptide: Peptide methionine sulfoxide reductase MsrA (169 aa).

The active site involves C10.

Belongs to the MsrA Met sulfoxide reductase family.

The catalysed reaction is L-methionyl-[protein] + [thioredoxin]-disulfide + H2O = L-methionyl-(S)-S-oxide-[protein] + [thioredoxin]-dithiol. It catalyses the reaction [thioredoxin]-disulfide + L-methionine + H2O = L-methionine (S)-S-oxide + [thioredoxin]-dithiol. Has an important function as a repair enzyme for proteins that have been inactivated by oxidation. Catalyzes the reversible oxidation-reduction of methionine sulfoxide in proteins to methionine. The protein is Peptide methionine sulfoxide reductase MsrA of Streptococcus pyogenes serotype M1.